A 171-amino-acid polypeptide reads, in one-letter code: 3-hydroxydecanoyl-[acyl-carrier-protein] dehydratase (171 aa).

The active site involves His70.

Belongs to the thioester dehydratase family. FabA subfamily. As to quaternary structure, homodimer.

The protein localises to the cytoplasm. The enzyme catalyses a (3R)-hydroxyacyl-[ACP] = a (2E)-enoyl-[ACP] + H2O. The catalysed reaction is (3R)-hydroxydecanoyl-[ACP] = (2E)-decenoyl-[ACP] + H2O. It carries out the reaction (2E)-decenoyl-[ACP] = (3Z)-decenoyl-[ACP]. It participates in lipid metabolism; fatty acid biosynthesis. In terms of biological role, necessary for the introduction of cis unsaturation into fatty acids. Catalyzes the dehydration of (3R)-3-hydroxydecanoyl-ACP to E-(2)-decenoyl-ACP and then its isomerization to Z-(3)-decenoyl-ACP. Can catalyze the dehydratase reaction for beta-hydroxyacyl-ACPs with saturated chain lengths up to 16:0, being most active on intermediate chain length. This Hydrogenovibrio crunogenus (strain DSM 25203 / XCL-2) (Thiomicrospira crunogena) protein is 3-hydroxydecanoyl-[acyl-carrier-protein] dehydratase.